Consider the following 398-residue polypeptide: Probable pectate lyase P56 (398 aa).

Positions 1–27 (MEYSYRTKINVLFIVLILFVFAALGTA) are cleaved as a signal peptide. Asn-135 is a glycosylation site (N-linked (GlcNAc...) asparagine). Ca(2+) contacts are provided by Asp-192, Asp-217, and Asp-221. Asn-228 carries an N-linked (GlcNAc...) asparagine glycan. Arg-273 is an active-site residue.

It belongs to the polysaccharide lyase 1 family. Ca(2+) serves as cofactor. In terms of tissue distribution, expressed in anthers and pollen.

The enzyme catalyses Eliminative cleavage of (1-&gt;4)-alpha-D-galacturonan to give oligosaccharides with 4-deoxy-alpha-D-galact-4-enuronosyl groups at their non-reducing ends.. It participates in glycan metabolism; pectin degradation; 2-dehydro-3-deoxy-D-gluconate from pectin: step 2/5. Functionally, might be needed during pollen development and tube growth. The polypeptide is Probable pectate lyase P56 (LAT56) (Solanum lycopersicum (Tomato)).